The primary structure comprises 531 residues: Zinc finger protein 692 (531 aa).

The segment covering 155 to 178 has biased composition (basic and acidic residues); it reads EAQGLECEQRERTQETRLSRRVDS. 2 disordered regions span residues 155–249 and 287–307; these read EAQG…PATL and MTES…PTWD. The segment covering 186 to 206 has biased composition (acidic residues); sequence LGEDQDVEEEEEEEEEEEELL. The residue at position 231 (S231) is a Phosphoserine. Residues 290–303 show a composition bias toward polar residues; that stretch reads SLESPGSQAQSAPN. C2H2-type zinc fingers lie at residues 327 to 352, 358 to 382, 388 to 410, 416 to 438, and 447 to 470; these read MPCD…KYQH, FCCP…VKLH, YICE…RRIH, LQCE…RRKH, and FPCE…SKSH. The residue at position 469 (S469) is a Phosphoserine. The segment at 474 to 531 is disordered; that stretch reads LPAQEPPGSLVSSPSISAPESLQSPEGASISTTSDSNPASSTSISSPGVPDPRNREKS. Polar residues predominate over residues 483-499; it reads LVSSPSISAPESLQSPE. Positions 502 to 520 are enriched in low complexity; it reads SISTTSDSNPASSTSISSP.

This sequence belongs to the krueppel C2H2-type zinc-finger protein family. Phosphorylation at Ser-469 results in loss of DNA-binding activity.

The protein localises to the nucleus. In terms of biological role, may act as an transcriptional repressor for PCK1 gene expression, in turn may participate in the hepatic gluconeogenesis regulation through the activated AMPK signaling pathway. The protein is Zinc finger protein 692 of Mus musculus (Mouse).